The sequence spans 285 residues: Ribonuclease H1 (285 aa).

The tract at residues 72 to 122 (RSSSSPDGSKGQESAHVQKLQVKTSKRPREPLGEEEEPPEPGAKHTRQDTE) is disordered. Residues 135-281 (MGESVVVYTD…ADRLAREGAK (147 aa)) form the RNase H type-1 domain. Mg(2+) is bound by residues Asp-144, Glu-185, Asp-209, and Asp-273.

The protein belongs to the RNase H family. As to quaternary structure, monomer. Requires Mg(2+) as cofactor.

The protein resides in the cytoplasm. It carries out the reaction Endonucleolytic cleavage to 5'-phosphomonoester.. Its activity is regulated as follows. In the presence of magnesium, manganese is inhibitory. Functionally, endonuclease that specifically degrades the RNA of RNA-DNA hybrids. Plays a role in RNA polymerase II (RNAp II) transcription termination by degrading R-loop RNA-DNA hybrid formation at G-rich pause sites located downstream of the poly(A) site and behind the elongating RNAp II. The polypeptide is Ribonuclease H1 (Rnaseh1) (Rattus norvegicus (Rat)).